A 654-amino-acid polypeptide reads, in one-letter code: Myrosinase-binding protein 2 (654 aa).

Jacalin-type lectin domains lie at serine 2–alanine 151, leucine 156–proline 291, proline 346–proline 489, and alanine 502–proline 645. Pro residues predominate over residues valine 314–proline 346. Residues valine 314–asparagine 355 form a disordered region.

The protein belongs to the jacalin lectin family. In terms of tissue distribution, expressed in flowers. Detected mainly in ovules and styles of immature flowers, but also in pistils, styles, stamens, petals and embryos. Not detected in leaves.

The polypeptide is Myrosinase-binding protein 2 (MBP2) (Arabidopsis thaliana (Mouse-ear cress)).